The chain runs to 200 residues: Flavin prenyltransferase UbiX (200 aa).

FMN contacts are provided by residues 15–17 (GAS), T41, 102–105 (SMGT), and R137. Positions 167 and 183 each coordinate dimethylallyl phosphate.

Belongs to the UbiX/PAD1 family.

The enzyme catalyses dimethylallyl phosphate + FMNH2 = prenylated FMNH2 + phosphate. Its function is as follows. Flavin prenyltransferase that catalyzes the synthesis of the prenylated FMN cofactor (prenyl-FMN) for 4-hydroxy-3-polyprenylbenzoic acid decarboxylase UbiD. The prenyltransferase is metal-independent and links a dimethylallyl moiety from dimethylallyl monophosphate (DMAP) to the flavin N5 and C6 atoms of FMN. The chain is Flavin prenyltransferase UbiX from Alkalihalophilus pseudofirmus (strain ATCC BAA-2126 / JCM 17055 / OF4) (Bacillus pseudofirmus).